Consider the following 594-residue polypeptide: Transcription factor BYE1 (594 aa).

Residues 1–13 are compositionally biased toward polar residues; that stretch reads MSVRTSSRSNKGQ. Residues 1 to 65 are disordered; it reads MSVRTSSRSN…DTENVRTDEV (65 aa). A compositionally biased stretch (basic and acidic residues) spans 36–63; the sequence is KVDSATEKNKKSDSSQEPRKDTENVRTD. The PHD-type zinc-finger motif lies at 72–134; that stretch reads YVRCLCGANN…KYYCELCDPS (63 aa). Residues 142–231 are disordered; sequence SKEAEVSEDE…EMPTRKDFES (90 aa). Positions 155–164 are enriched in basic and acidic residues; the sequence is DDVYKPVNDH. Residues 165–175 show a composition bias toward acidic residues; that stretch reads DDNDADVFLDE. Serine 177 bears the Phosphoserine mark. Basic residues predominate over residues 191–208; that stretch reads IHIKSKQVKKSNGSKKRN. Residues 209–231 show a composition bias toward basic and acidic residues; sequence KSIDAAKSDTAENEMPTRKDFES. The region spanning 254-365 is the TFIIS central domain; the sequence is VPETIEAKLY…DKVILENFIV (112 aa).

Belongs to the BYE1 family. In terms of assembly, interacts with the RNA polymerase RPB1 subunit and specifically with the trimethylated H3 histone H3K4me3.

The protein localises to the nucleus. Functionally, negative regulator of transcription elongation. The protein is Transcription factor BYE1 (BYE1) of Saccharomyces cerevisiae (strain YJM789) (Baker's yeast).